The chain runs to 467 residues: Cell division protein FtsP (467 aa).

The segment at residues 1–28 (MRSLTRRDFLKSGILASSLSCIPQSVMA) is a signal peptide (tat-type signal).

This sequence belongs to the FtsP family. In terms of processing, predicted to be exported by the Tat system. The position of the signal peptide cleavage has not been experimentally proven.

It localises to the periplasm. Functionally, cell division protein that is required for growth during stress conditions. May be involved in protecting or stabilizing the divisomal assembly under conditions of stress. The sequence is that of Cell division protein FtsP from Histophilus somni (strain 2336) (Haemophilus somnus).